The following is a 937-amino-acid chain: Protein translocase subunit SecA (937 aa).

Residues Q90, 108–112 (GEGKT), and D509 each bind ATP.

Belongs to the SecA family. As to quaternary structure, monomer and homodimer. Part of the essential Sec protein translocation apparatus which comprises SecA, SecYEG and auxiliary proteins SecDF. Other proteins may also be involved.

It is found in the cell inner membrane. The protein resides in the cellular thylakoid membrane. The protein localises to the cytoplasm. It carries out the reaction ATP + H2O + cellular proteinSide 1 = ADP + phosphate + cellular proteinSide 2.. Functionally, part of the Sec protein translocase complex. Interacts with the SecYEG preprotein conducting channel. Has a central role in coupling the hydrolysis of ATP to the transfer of proteins into and across the cell membrane, serving as an ATP-driven molecular motor driving the stepwise translocation of polypeptide chains across the membrane. Its function is as follows. Probably participates in protein translocation into and across both the cytoplasmic and thylakoid membranes in cyanobacterial cells. In Synechococcus sp. (strain CC9902), this protein is Protein translocase subunit SecA.